A 657-amino-acid polypeptide reads, in one-letter code: N-acetylgalactosaminyltransferase 7 (657 aa).

At 1-6 the chain is on the cytoplasmic side; it reads MRLKIG. Residues 7–29 traverse the membrane as a helical; Signal-anchor for type II membrane protein segment; that stretch reads FILRSLLVVGSFLGLVVLWSSLS. Disordered stretches follow at residues 30–66 and 83–105; these read SRPD…DDRF and ESIR…DSQR. Over 30–657 the chain is Lumenal; that stretch reads SRPDDQSPLS…KWEMNNIHSV (628 aa). Intrachain disulfides connect Cys197–Cys435, Cys426–Cys507, Cys545–Cys562, Cys585–Cys600, and Cys625–Cys640. Residues 206–317 form a catalytic subdomain A region; that stretch reads LLTSSVVIVF…VNWYAPLVAP (112 aa). Residues Asp247 and Arg277 each contribute to the substrate site. Residues Asp301 and His303 each coordinate Mn(2+). The interval 381-443 is catalytic subdomain B; the sequence is PYRSPAMAGG…PCSRVGHIYR (63 aa). Trp412 is a substrate binding site. His440 is a Mn(2+) binding site. Substrate is bound at residue Arg443. Residues 532–652 enclose the Ricin B-type lectin domain; sequence VEWGEIRGLE…SKMTQKWEMN (121 aa).

This sequence belongs to the glycosyltransferase 2 family. GalNAc-T subfamily. Mn(2+) serves as cofactor. As to expression, highly expressed in sublingual gland. Expressed at lower level in stomach, small intestiine and colon.

The protein localises to the golgi apparatus membrane. The enzyme catalyses L-seryl-[protein] + UDP-N-acetyl-alpha-D-galactosamine = a 3-O-[N-acetyl-alpha-D-galactosaminyl]-L-seryl-[protein] + UDP + H(+). The catalysed reaction is L-threonyl-[protein] + UDP-N-acetyl-alpha-D-galactosamine = a 3-O-[N-acetyl-alpha-D-galactosaminyl]-L-threonyl-[protein] + UDP + H(+). It functions in the pathway protein modification; protein glycosylation. In terms of biological role, glycopeptide transferase involved in O-linked oligosaccharide biosynthesis, which catalyzes the transfer of an N-acetyl-D-galactosamine residue to an already glycosylated peptide. In contrast to other proteins of the family, it does not act as a peptide transferase that transfers GalNAc onto serine or threonine residue on the protein receptor, but instead requires the prior addition of a GalNAc on a peptide before adding additional GalNAc moieties. Some peptide transferase activity is however not excluded, considering that its appropriate peptide substrate may remain unidentified. This chain is N-acetylgalactosaminyltransferase 7 (Galnt7), found in Mus musculus (Mouse).